The chain runs to 340 residues: Phosphate acyltransferase (340 aa).

It belongs to the PlsX family. As to quaternary structure, homodimer. Probably interacts with PlsY.

The protein localises to the cytoplasm. It carries out the reaction a fatty acyl-[ACP] + phosphate = an acyl phosphate + holo-[ACP]. It participates in lipid metabolism; phospholipid metabolism. Functionally, catalyzes the reversible formation of acyl-phosphate (acyl-PO(4)) from acyl-[acyl-carrier-protein] (acyl-ACP). This enzyme utilizes acyl-ACP as fatty acyl donor, but not acyl-CoA. In Pseudomonas savastanoi pv. phaseolicola (strain 1448A / Race 6) (Pseudomonas syringae pv. phaseolicola (strain 1448A / Race 6)), this protein is Phosphate acyltransferase.